A 698-amino-acid chain; its full sequence is Elongation factor G (698 aa).

Residues 10–285 (AGTRNIGIMA…AVVDFLPNPL (276 aa)) form the tr-type G domain. GTP is bound by residues 19–26 (AHIDAGKT), 83–87 (DTPGH), and 137–140 (NKMD).

Belongs to the TRAFAC class translation factor GTPase superfamily. Classic translation factor GTPase family. EF-G/EF-2 subfamily.

It localises to the cytoplasm. Functionally, catalyzes the GTP-dependent ribosomal translocation step during translation elongation. During this step, the ribosome changes from the pre-translocational (PRE) to the post-translocational (POST) state as the newly formed A-site-bound peptidyl-tRNA and P-site-bound deacylated tRNA move to the P and E sites, respectively. Catalyzes the coordinated movement of the two tRNA molecules, the mRNA and conformational changes in the ribosome. The polypeptide is Elongation factor G (Frankia casuarinae (strain DSM 45818 / CECT 9043 / HFP020203 / CcI3)).